The primary structure comprises 977 residues: Protein bicaudal C homolog 1 (977 aa).

The interval 1 to 43 is disordered; the sequence is MASQSEPGYLAAAQSDPGSNSERSTDSPVAGSEDDLVAAAPLL. Ser-27, Ser-32, and Ser-45 each carry phosphoserine. 2 KH domains span residues 134-201 and 286-350; these read RVTL…RARI and PVST…RQYL. Residue Lys-400 is modified to N6-acetyllysine. Residues 590–621 show a composition bias toward polar residues; the sequence is SLGEKVLSSNHGDPSMQTAGPEQASPKSNSVE. Disordered regions lie at residues 590 to 622, 667 to 702, and 794 to 848; these read SLGEKVLSSNHGDPSMQTAGPEQASPKSNSVEG, GTKNSHLHGTDRLLSDPELSATESPLADKKAPGSER, and EGSS…KSRE. Phosphoserine is present on residues Ser-614 and Ser-681. Positions 692–702 are enriched in basic and acidic residues; sequence LADKKAPGSER. The span at 794–803 shows a compositional bias: low complexity; sequence EGSSLSLSRS. The SAM domain maps to 875 to 938; the sequence is FKGSDLPELF…LLAISELSKN (64 aa).

It belongs to the BicC family. As to quaternary structure, interacts (via KH domains) with ANKS6 (via SAM domain) in an RNA-dependent manner. Interacts with ANKS3. As to expression, in the adult, predominantly expressed in heart and kidney. In 8 week old mice, expressed in growing primary oocytes and in the stromal cells of the theca.

Its subcellular location is the cytoplasm. Putative RNA-binding protein. May be involved in regulating gene expression during embryonic development. The sequence is that of Protein bicaudal C homolog 1 (Bicc1) from Mus musculus (Mouse).